A 361-amino-acid chain; its full sequence is Adenosine kinase (361 aa).

A Nuclear localization signal motif is present at residues 7-15 (PKPKKLKVE). Position 34 (D34) interacts with adenosine. A Mg(2+)-binding site is contributed by S48. The residue at position 76 (Y76) is a Phosphotyrosine. Mg(2+) contacts are provided by D146 and N147. Position 305 (Q305) interacts with adenosine. Residue D316 is part of the active site. Residue D316 is the Proton acceptor of the active site.

The protein belongs to the carbohydrate kinase PfkB family. Monomer. Requires Mg(2+) as cofactor. The N-terminus is blocked.

Its subcellular location is the nucleus. The enzyme catalyses adenosine + ATP = AMP + ADP + H(+). Its pathway is purine metabolism; AMP biosynthesis via salvage pathway; AMP from adenosine: step 1/1. Its activity is regulated as follows. Activity is inhibited by 5-iodotubercidin and 5'-amino-5'-deoxyadenosine. Functionally, catalyzes the phosphorylation of the purine nucleoside adenosine at the 5' position in an ATP-dependent manner. Serves as a potential regulator of concentrations of extracellular adenosine and intracellular adenine nucleotides. This Cricetulus griseus (Chinese hamster) protein is Adenosine kinase (ADK).